A 164-amino-acid polypeptide reads, in one-letter code: Lipoprotein signal peptidase (164 aa).

Transmembrane regions (helical) follow at residues 12–32 (WLWL…LILQ), 70–90 (WFFA…MYRL), and 102–122 (ALII…GFVV). Active-site residues include Asp123 and Asp141. The chain crosses the membrane as a helical span at residues 137–157 (FNLADTAICVGAALIVLEGFL).

This sequence belongs to the peptidase A8 family.

It localises to the cell inner membrane. It carries out the reaction Release of signal peptides from bacterial membrane prolipoproteins. Hydrolyzes -Xaa-Yaa-Zaa-|-(S,diacylglyceryl)Cys-, in which Xaa is hydrophobic (preferably Leu), and Yaa (Ala or Ser) and Zaa (Gly or Ala) have small, neutral side chains.. It participates in protein modification; lipoprotein biosynthesis (signal peptide cleavage). Functionally, this protein specifically catalyzes the removal of signal peptides from prolipoproteins. The polypeptide is Lipoprotein signal peptidase (Shigella boydii serotype 4 (strain Sb227)).